The sequence spans 459 residues: MADVSQRTQQAVDTAMAGAAEMSRYGRRLLNMLWDPEPTNDRSLNRPVWCLGCSYTNEPTTVDRPDQDASSTVRATLPTTPSTTTLPYPLKAVPTTPPESSSSSFSSSLAYDELLEDAGWPIAFLDDFESRVWMTYRSEFEPISKSNDPRASAALSFAMRLRTLADQGGFSSDTGWGCMIRSGQSLLANTLVICQLGRDWRRGKAARQEREILARFADDPRAPYSLHNFVRHGAVACGKFPGEWFGPSATARCIQALANSNESSLRVYSTGDLPDVYEDSFMAVAKPDGETFHPTLILVGTRLGIDKINQVYWEALTATLQMPQSVGIAGGRPSASHYFIGAQRSGDAYEPGSYLFYLDPHCTRPALPFHEDVDQYTSDDINTCHTRRLRRLHVRDMDPSMLIGFLIKDEDDWDMWKDSVKYVQGKTIINVADHDPARGMPAEREAAIDEVETLKGEFV.

The span at 77–90 (LPTTPSTTTLPYPL) shows a compositional bias: low complexity. The tract at residues 77–104 (LPTTPSTTTLPYPLKAVPTTPPESSSSS) is disordered. C178 (nucleophile) is an active-site residue. Active-site residues include D359 and H361.

It belongs to the peptidase C54 family.

Its subcellular location is the cytoplasm. The protein resides in the nucleus. It localises to the preautophagosomal structure. It catalyses the reaction [protein]-C-terminal L-amino acid-glycyl-phosphatidylethanolamide + H2O = [protein]-C-terminal L-amino acid-glycine + a 1,2-diacyl-sn-glycero-3-phosphoethanolamine. In terms of biological role, cysteine protease that plays a key role in cytoplasm to vacuole transport (Cvt) and autophagy by mediating both proteolytic activation and delipidation of ATG8. Required for selective autophagic degradation of the nucleus (nucleophagy) as well as for mitophagy which contributes to regulate mitochondrial quantity and quality by eliminating the mitochondria to a basal level to fulfill cellular energy requirements and preventing excess ROS production. The protease activity is required for proteolytic activation of ATG8: cleaves the C-terminal amino acid of ATG8 to reveal a C-terminal glycine. ATG8 ubiquitin-like activity requires the exposure of the glycine at the C-terminus for its conjugation to phosphatidylethanolamine (PE) and its insertion to membranes, which is necessary for autophagy. The ATG8-PE conjugate mediates tethering between adjacent membranes and stimulates membrane hemifusion, leading to expansion of the autophagosomal membrane during autophagy. In addition to the protease activity, also catalyzes deconjugation of PE-conjugated forms of ATG8 during macroautophagy: ATG8 delipidation is required to release the protein from membranes, which facilitates multiple events during macroautophagy, and especially for efficient autophagosome biogenesis, the assembly of ATG9-containing tubulovesicular clusters into phagophores/autophagosomes, and for the disassembly of PAS-associated ATG components. ATG8 delipidation by ATG4 also recycles ATG8-PE generated on inappropriate membranes to maintain a reservoir of unlipidated ATG8 that is required for autophagosome formation at the PAS. This chain is Probable cysteine protease ATG4 (ATG4), found in Cryphonectria parasitica (Chestnut blight fungus).